The following is a 284-amino-acid chain: Bifunctional protein FolD (284 aa).

NADP(+) contacts are provided by residues 164-166, T189, and I230; that span reads GRG.

This sequence belongs to the tetrahydrofolate dehydrogenase/cyclohydrolase family. Homodimer.

It carries out the reaction (6R)-5,10-methylene-5,6,7,8-tetrahydrofolate + NADP(+) = (6R)-5,10-methenyltetrahydrofolate + NADPH. The catalysed reaction is (6R)-5,10-methenyltetrahydrofolate + H2O = (6R)-10-formyltetrahydrofolate + H(+). It participates in one-carbon metabolism; tetrahydrofolate interconversion. Functionally, catalyzes the oxidation of 5,10-methylenetetrahydrofolate to 5,10-methenyltetrahydrofolate and then the hydrolysis of 5,10-methenyltetrahydrofolate to 10-formyltetrahydrofolate. This is Bifunctional protein FolD from Pelotomaculum thermopropionicum (strain DSM 13744 / JCM 10971 / SI).